We begin with the raw amino-acid sequence, 335 residues long: MRMQSNPKADLLLDVRDLETHFYGEESVTRALGGVNFHVKSGEMLGIVGESGCGKSVTALSILRLLPKQTAKTVGGEVIFKGRNLLELSERQMREVRGNRIAMIFQDPMTSLSPVHTVGRQIAEAVQIHGRVSRAEALEKALEMLRLVRIADPERRLNNYPHEMSGGMRQRAMIAMALACSPELLIADEPTTALDVTIQAQILRLIVDLKDRMGTAVMFITHDLGVVAETCQRVIVMYAGRIVEQASVTDLFARPTHPYTRALMNSVPDRRRGRQSRLPEIPGVVPSLREPLVGCSFAERCPFAIGVCREKMPVLSEIQPGHAAACWRSNEVVNL.

Positions 15-264 constitute an ABC transporter domain; the sequence is VRDLETHFYG…PTHPYTRALM (250 aa). ATP is bound at residue 49–56; the sequence is GESGCGKS.

This sequence belongs to the ABC transporter superfamily.

Its subcellular location is the cell inner membrane. Functionally, probably part of a binding-protein-dependent transport system y4tOPQRS for a peptide. Probably responsible for energy coupling to the transport system. The protein is Probable peptide ABC transporter ATP-binding protein y4tR of Sinorhizobium fredii (strain NBRC 101917 / NGR234).